We begin with the raw amino-acid sequence, 118 residues long: Ribonuclease P protein component (118 aa).

It belongs to the RnpA family. As to quaternary structure, consists of a catalytic RNA component (M1 or rnpB) and a protein subunit.

The enzyme catalyses Endonucleolytic cleavage of RNA, removing 5'-extranucleotides from tRNA precursor.. Functionally, RNaseP catalyzes the removal of the 5'-leader sequence from pre-tRNA to produce the mature 5'-terminus. It can also cleave other RNA substrates such as 4.5S RNA. The protein component plays an auxiliary but essential role in vivo by binding to the 5'-leader sequence and broadening the substrate specificity of the ribozyme. The polypeptide is Ribonuclease P protein component (Vibrio parahaemolyticus serotype O3:K6 (strain RIMD 2210633)).